Here is a 78-residue protein sequence, read N- to C-terminus: Large ribosomal subunit protein bL28 (78 aa).

Belongs to the bacterial ribosomal protein bL28 family.

This is Large ribosomal subunit protein bL28 from Pectobacterium atrosepticum (strain SCRI 1043 / ATCC BAA-672) (Erwinia carotovora subsp. atroseptica).